The primary structure comprises 326 residues: UDP-3-O-acylglucosamine N-acyltransferase (326 aa).

The active-site Proton acceptor is His-233.

It belongs to the transferase hexapeptide repeat family. LpxD subfamily. As to quaternary structure, homotrimer.

It catalyses the reaction a UDP-3-O-[(3R)-3-hydroxyacyl]-alpha-D-glucosamine + a (3R)-hydroxyacyl-[ACP] = a UDP-2-N,3-O-bis[(3R)-3-hydroxyacyl]-alpha-D-glucosamine + holo-[ACP] + H(+). Its pathway is bacterial outer membrane biogenesis; LPS lipid A biosynthesis. Functionally, catalyzes the N-acylation of UDP-3-O-acylglucosamine using 3-hydroxyacyl-ACP as the acyl donor. Is involved in the biosynthesis of lipid A, a phosphorylated glycolipid that anchors the lipopolysaccharide to the outer membrane of the cell. The polypeptide is UDP-3-O-acylglucosamine N-acyltransferase (Aquifex aeolicus (strain VF5)).